A 189-amino-acid polypeptide reads, in one-letter code: CASP-like protein 1F2 (189 aa).

Residues 1-27 (MESLEVANGKSSALGVSREASSPPQMG) lie on the Cytoplasmic side of the membrane. The helical transmembrane segment at 28–48 (FFIAQVVLRFFTLAFTGAAIA) threads the bilayer. Topologically, residues 49 to 77 (VMVTAKETVEVFSISFTVRYSYLSAFKFL) are extracellular. Residues 78–98 (VGADAVVCGFSMLSLIFVSIF) traverse the membrane as a helical segment. Residues 99–113 (NKGKSNHYFFLYFHD) lie on the Cytoplasmic side of the membrane. The helical transmembrane segment at 114–134 (LILMVLSMSACAAATAVGYVG) threads the bilayer. At 135 to 156 (RYGQDKAAWMAVCGNVKMFCDK) the chain is on the extracellular side. The chain crosses the membrane as a helical span at residues 157–177 (ALASILLSLIGFICLFLLTIM). The Cytoplasmic segment spans residues 178–189 (AARNLRVSGHLI).

This sequence belongs to the Casparian strip membrane proteins (CASP) family. In terms of assembly, homodimer and heterodimers.

Its subcellular location is the cell membrane. The chain is CASP-like protein 1F2 from Vitis vinifera (Grape).